The chain runs to 216 residues: DNA replication complex GINS protein PSF3 (216 aa).

The segment at 1-16 is not essential for folding and stability of GINS complex, but may regulate accessibility to the central complex pore; sequence MSEAYFRVESGALGPE.

It belongs to the GINS3/PSF3 family. In terms of assembly, component of the GINS complex which is a heterotetramer of GINS1, GINS2, GINS3 and GINS4. Forms a stable subcomplex with GINS2. GINS complex interacts with DNA primase in vitro. Component of the CMG helicase complex, a hexameric ring of related MCM2-7 subunits stabilized by CDC45 and the tetrameric GINS complex.

It localises to the nucleus. Its subcellular location is the chromosome. Required for correct functioning of the GINS complex, a complex that plays an essential role in the initiation of DNA replication, and progression of DNA replication forks. GINS complex is a core component of CDC45-MCM-GINS (CMG) helicase, the molecular machine that unwinds template DNA during replication, and around which the replisome is built. In Bos taurus (Bovine), this protein is DNA replication complex GINS protein PSF3 (GINS3).